We begin with the raw amino-acid sequence, 88 residues long: Sec-independent protein translocase protein TatA (88 aa).

A helical membrane pass occupies residues 1–21; the sequence is MGGISIWQLLIIAVIVVLLFG. The segment at 41–88 is disordered; the sequence is KAMGDENQKETNNAEKTTNDADFDTKNLAQKTSTEEKSTTESKNKEQV. Composition is skewed to basic and acidic residues over residues 42–65 and 73–88; these read AMGD…DFDT and STEE…KEQV.

It belongs to the TatA/E family. As to quaternary structure, the Tat system comprises two distinct complexes: a TatABC complex, containing multiple copies of TatA, TatB and TatC subunits, and a separate TatA complex, containing only TatA subunits. Substrates initially bind to the TatABC complex, which probably triggers association of the separate TatA complex to form the active translocon.

It localises to the cell inner membrane. In terms of biological role, part of the twin-arginine translocation (Tat) system that transports large folded proteins containing a characteristic twin-arginine motif in their signal peptide across membranes. TatA could form the protein-conducting channel of the Tat system. The polypeptide is Sec-independent protein translocase protein TatA (Proteus mirabilis (strain HI4320)).